A 296-amino-acid chain; its full sequence is tRNA dimethylallyltransferase (296 aa).

11 to 18 (GPTAVGKT) provides a ligand contact to ATP. Residue 13-18 (TAVGKT) participates in substrate binding. The segment at 36 to 39 (DSQQ) is interaction with substrate tRNA.

Belongs to the IPP transferase family. Monomer. Requires Mg(2+) as cofactor.

It carries out the reaction adenosine(37) in tRNA + dimethylallyl diphosphate = N(6)-dimethylallyladenosine(37) in tRNA + diphosphate. Functionally, catalyzes the transfer of a dimethylallyl group onto the adenine at position 37 in tRNAs that read codons beginning with uridine, leading to the formation of N6-(dimethylallyl)adenosine (i(6)A). The chain is tRNA dimethylallyltransferase from Streptococcus equi subsp. equi (strain 4047).